The primary structure comprises 460 residues: Probable lipid II flippase MurJ (460 aa).

Transmembrane regions (helical) follow at residues 4–24, 50–70, 95–115, 122–142, 155–175, 228–248, 257–277, 292–312, 336–356, 366–386, and 428–448; these read ILGA…PNLF, FASL…LLVA, IVAI…LGAL, FFAS…ALLI, LSYG…YPLV, IASF…VSYL, LPLA…IAIA, KAWF…IMLS, VFSL…FSLW, AAKI…SLMP, and LVIL…KSWV.

This sequence belongs to the MurJ/MviN family.

Its subcellular location is the cell inner membrane. It functions in the pathway cell wall biogenesis; peptidoglycan biosynthesis. Its function is as follows. Involved in peptidoglycan biosynthesis. Transports lipid-linked peptidoglycan precursors from the inner to the outer leaflet of the cytoplasmic membrane. The protein is Probable lipid II flippase MurJ of Helicobacter pylori (strain J99 / ATCC 700824) (Campylobacter pylori J99).